The primary structure comprises 112 residues: Large ribosomal subunit protein P2A (112 aa).

The tract at residues 83-112 (GAAPAAEAKKEEKVEEKEESDDDMGFSLFD) is disordered. Residues 89-98 (EAKKEEKVEE) are compositionally biased toward basic and acidic residues.

This sequence belongs to the eukaryotic ribosomal protein P1/P2 family. P1 and P2 exist as dimers at the large ribosomal subunit. In terms of processing, phosphorylated.

Plays an important role in the elongation step of protein synthesis. This Zea mays (Maize) protein is Large ribosomal subunit protein P2A (RPP2A).